Consider the following 107-residue polypeptide: Phosphoribosyl-ATP pyrophosphatase (107 aa).

Belongs to the PRA-PH family.

The protein resides in the cytoplasm. It carries out the reaction 1-(5-phospho-beta-D-ribosyl)-ATP + H2O = 1-(5-phospho-beta-D-ribosyl)-5'-AMP + diphosphate + H(+). It participates in amino-acid biosynthesis; L-histidine biosynthesis; L-histidine from 5-phospho-alpha-D-ribose 1-diphosphate: step 2/9. The chain is Phosphoribosyl-ATP pyrophosphatase from Nitrobacter hamburgensis (strain DSM 10229 / NCIMB 13809 / X14).